The sequence spans 578 residues: Rhamnogalacturonate lyase (578 aa).

The first 27 residues, 1–27 (MHMNKPLQAWRTPLLTLIFVLPLTATG), serve as a signal peptide directing secretion.

This sequence belongs to the polysaccharide lyase 4 family.

The protein localises to the secreted. It catalyses the reaction Endotype eliminative cleavage of L-alpha-rhamnopyranosyl-(1-&gt;4)-alpha-D-galactopyranosyluronic acid bonds of rhamnogalacturonan I domains in ramified hairy regions of pectin leaving L-rhamnopyranose at the reducing end and 4-deoxy-4,5-unsaturated D-galactopyranosyluronic acid at the non-reducing end.. Its function is as follows. Degrades the rhamnogalacturonan I (RG-I) backbone of pectin. Is required for the full virulence of E.chrysanthemi strain 3937 as it is involved in rotting of plant tissue. The chain is Rhamnogalacturonate lyase (rhiE) from Dickeya dadantii (strain 3937) (Erwinia chrysanthemi (strain 3937)).